The following is a 243-amino-acid chain: MNKNPRLDFSSPSSLATISDSADGELNEDDIFAIDISHAPPQARHSPVSSPAKQQTPARQLQRSKSGLKNVEASGILAALPESSGSSSYLSHVFHHKPAAALSTSVSSTASSSSSSGGGASAGSSSSARAIPTAPKPPQERLPFSASFVGGGKYPQSAPVQVPLVSSAMMNRHKKEFKLTDVVDDDEEEEEGEMLPPHEIVARSLAQSSLLSCSVLEGAGRTLKGRDLRQVRNAVFRRTGFID.

2 disordered regions span residues 1–68 and 107–143; these read MNKN…KSGL and SSTA…ERLP. Positions 10–20 are enriched in polar residues; the sequence is SSPSSLATISD. Residues 22 to 32 are compositionally biased toward acidic residues; sequence ADGELNEDDIF. Positions 47-67 are enriched in polar residues; sequence PVSSPAKQQTPARQLQRSKSG.

It belongs to the senescence regulator S40 family.

It localises to the cytoplasm. The polypeptide is Protein S40-7 (Arabidopsis thaliana (Mouse-ear cress)).